The chain runs to 508 residues: Photosystem II CP47 reaction center protein (508 aa).

6 consecutive transmembrane segments (helical) span residues 21-36 (SVHIMHTALVAGWAGS), 101-115 (IVFSGLCFLAAIWHW), 140-156 (GIHLFLSGVACFGFGAF), 203-218 (IAAGTLGILAGLFHLS), 237-252 (VLSSSIAAVFFAAFVV), and 457-472 (SFALLFFFGHIWHGAR).

Belongs to the PsbB/PsbC family. PsbB subfamily. As to quaternary structure, PSII is composed of 1 copy each of membrane proteins PsbA, PsbB, PsbC, PsbD, PsbE, PsbF, PsbH, PsbI, PsbJ, PsbK, PsbL, PsbM, PsbT, PsbX, PsbY, PsbZ, Psb30/Ycf12, at least 3 peripheral proteins of the oxygen-evolving complex and a large number of cofactors. It forms dimeric complexes. It depends on Binds multiple chlorophylls. PSII binds additional chlorophylls, carotenoids and specific lipids. as a cofactor.

It is found in the plastid. Its subcellular location is the chloroplast thylakoid membrane. Its function is as follows. One of the components of the core complex of photosystem II (PSII). It binds chlorophyll and helps catalyze the primary light-induced photochemical processes of PSII. PSII is a light-driven water:plastoquinone oxidoreductase, using light energy to abstract electrons from H(2)O, generating O(2) and a proton gradient subsequently used for ATP formation. This Manihot esculenta (Cassava) protein is Photosystem II CP47 reaction center protein.